A 179-amino-acid polypeptide reads, in one-letter code: Ribulose bisphosphate carboxylase small subunit, chloroplastic 3 (179 aa).

The N-terminal 58 residues, 1-58 (MASSATMLSSVATAARAAPAQASMVAPFVGLKSASAFPVTQKPATGLSTLPSNGGRVQ), are a transit peptide targeting the chloroplast.

The protein belongs to the RuBisCO small chain family. As to quaternary structure, heterohexadecamer of 8 large and 8 small subunits.

The protein localises to the plastid. The protein resides in the chloroplast. Its function is as follows. RuBisCO catalyzes two reactions: the carboxylation of D-ribulose 1,5-bisphosphate, the primary event in carbon dioxide fixation, as well as the oxidative fragmentation of the pentose substrate. Both reactions occur simultaneously and in competition at the same active site. Although the small subunit is not catalytic it is essential for maximal activity. In Fritillaria agrestis (Stinkbells), this protein is Ribulose bisphosphate carboxylase small subunit, chloroplastic 3.